A 217-amino-acid chain; its full sequence is Cytidylate kinase (217 aa).

Position 9-17 (9-17 (GPSSSGKSS)) interacts with ATP.

This sequence belongs to the cytidylate kinase family. Type 1 subfamily.

The protein resides in the cytoplasm. The enzyme catalyses CMP + ATP = CDP + ADP. It catalyses the reaction dCMP + ATP = dCDP + ADP. The polypeptide is Cytidylate kinase (Mycoplasma pneumoniae (strain ATCC 29342 / M129 / Subtype 1) (Mycoplasmoides pneumoniae)).